The following is a 218-amino-acid chain: MDPFEGRMTFLQLLGKLNASQFSQIKPAQFAIKHLDLEEDLYSCIWEELESGSFNTRVNIMYFVDTLCEMCLKNGLTGGYLNMISRDICKLVQNVAPIGAAGAANAPEVRKVLQSLHEKKVIDDNQYKDAMATVEAHEQASKSGDTSTSGAISKNDILKRIEEDRERHKRMRENIWAISEPELEAEIAWNTTQGITESDLESLKDEYEKFNECLHATS.

The CID domain occupies 2–138; the sequence is DPFEGRMTFL…DAMATVEAHE (137 aa). A disordered region spans residues 137–157; it reads HEQASKSGDTSTSGAISKNDI. Positions 141–152 are enriched in polar residues; sequence SKSGDTSTSGAI.

The protein belongs to the CTK3 family. CTDK-I consists of three subunits, ctk1/lsk1, ctk2/lsc1 and ctk3 (also called alpha, beta and gamma).

The protein localises to the cytoplasm. Its subcellular location is the nucleus. In terms of biological role, subunit of the CTDK-I complex, which hyperphosphorylates the C-terminal heptapeptide repeat domain (CTD) of the largest RNA polymerase II subunit. As part of the CTDK-I complex, involved in RNA polymerase II transcriptional elongation and pre-mRNA 3'-end processing. Together with ctk2, required for ctk1/lsk1 CTD kinase activation. The polypeptide is CTD kinase subunit gamma (Schizosaccharomyces pombe (strain 972 / ATCC 24843) (Fission yeast)).